The following is a 195-amino-acid chain: dTTP/UTP pyrophosphatase (195 aa).

Aspartate 76 functions as the Proton acceptor in the catalytic mechanism.

Belongs to the Maf family. YhdE subfamily. Requires a divalent metal cation as cofactor.

The protein resides in the cytoplasm. The catalysed reaction is dTTP + H2O = dTMP + diphosphate + H(+). It carries out the reaction UTP + H2O = UMP + diphosphate + H(+). Nucleoside triphosphate pyrophosphatase that hydrolyzes dTTP and UTP. May have a dual role in cell division arrest and in preventing the incorporation of modified nucleotides into cellular nucleic acids. The protein is dTTP/UTP pyrophosphatase of Shewanella frigidimarina (strain NCIMB 400).